The chain runs to 928 residues: MNETMATDSPRRPSRCTGGVVVRPQAVTEQSYMESVVTFLQDVVPQAYSGSPLTEEKEKIVWVRFENADLNDTSRNLEFHELHSTGNEPPLLVMIGYSDGMQVWGIPISGEAQELFSVRHGPVRAARILPAPQLGAQKCDNFAEKRPLLGVCKSIGSSGTTPPYCCVDLYSLRTGEMVKSIQFKTPIYDLHCNKRILVVVLQEKIAAFDSCTFTKKFFVTSCYPCPGPNMNPIALGSRWLAYAENKLIRCHQSRGGACGDNIQSYTATVLSAAKTLKSGLTMVGKVVTQLTGTLPSGVTEDDVALHCNSRRSPLVPGIITVIDTETVGEGQVLVSEDSDSDGIVAHFPAHEKPVCCMAFNTSGMLLVTTDTLGHDFHVFQILTHPWSSSQCAVHHLYTLHRGETEAKVQDICFSHDCRWVVVSTLRGTSHVFPINPYGGQPCVRTHMSPRVVNRMSRFQKSAGLEEIEQELTSKQGGRCSPVPGLSSSPSGSPLHGKLTSQDSYNNFTNNNPGNPRLSPLPSLMVVTPLAQIKQPMTLGTITKRTGPYLFGAGCFSIKAPCKVKSPPQISPSKSMGGEFCVAAVFGTSRSWFANNAGLKREKDQSKQVVVESLYIISCYGTLVEHMIEPRPISTAPKISDDTPLEIMTSPRASWTLVRTPQWNELQPPFNANHPLLLAAEAVQYYQLLLAGSLPPGSPGPITRHGSYDSLASDHSGQEDEEWLSQVEIVTHTGPHRRLWMGPQFHFKTIQTSGQTTVISTSSSVLQSHGPSDTPQPLLDFDTDDLDLNSLRIQPVRSDPVSMPGSSRAVSDRRGVSTVTDAASGTFDRSVTLLEVCGSWPEGFGLRHMSSMEHSEEGLRERLADAMAESPSRDVVGSGTELQREGSIETLSNSSGSTSGSIPRNFDGYRSPLPTNESQPLSLFPTGFP.

Met-1 carries the N-acetylmethionine modification. A Glycyl lysine isopeptide (Lys-Gly) (interchain with G-Cter in SUMO1); alternate cross-link involves residue Lys-215. Lys-215 is covalently cross-linked (Glycyl lysine isopeptide (Lys-Gly) (interchain with G-Cter in SUMO2); alternate). Required for recruitment to preautophagosomal structure in response to mitophagy stretches follow at residues 254-312 (RGGA…SRRS) and 437-560 (YGGQ…IKAP). 3 positions are modified to phosphoserine: Ser-461, Ser-480, and Ser-488. Disordered regions lie at residues 472 to 518 (TSKQ…PRLS) and 795 to 816 (VRSDPVSMPGSSRAVSDRRGVS). Low complexity-rich tracts occupy residues 480-494 (SPVPGLSSSPSGSPL) and 505-514 (NNFTNNNPGN). 3 positions are modified to phosphoserine: Ser-838, Ser-886, and Ser-898. Residues 868–928 (ESPSRDVVGS…PLSLFPTGFP (61 aa)) form a disordered region. The segment covering 887-901 (IETLSNSSGSTSGSI) has biased composition (low complexity).

Belongs to the BCAS3 family. Interacts with histone H3, ESR1, KAT2B and PELP1; the interactions occur in a estrogen-dependent manner. Interacts with beta-tubulin and VIM. Interacts (via C-terminal) with PHAF1; the interaction is requrired for the association with the phagophore. As to expression, expressed in blood islands and yolk sac blood islands (at protein level). Highly expressed in mammary tumors. Expressed in eostrogen-induced epithelial cells of mammary glands. Expressed in brain, heart, kidney, lung, liver and spleen. Expressed in embryonic stem cells, embryoid bodies, endothelial cells and fibroblasts.

Its subcellular location is the nucleus. It is found in the cytoplasm. It localises to the cytoskeleton. The protein localises to the preautophagosomal structure. Functionally, functions synergistically with PELP1 as a transcriptional coactivator of estrogen receptor-responsive genes. Stimulates histone acetyltransferase activity. Binds to chromatin. Plays a role in angiogenesis. Participates in the regulation of cell polarity and directional endothelial cell migration by mediating both the activation and recruitment of CDC42 and the reorganization of the actin cytoskeleton at the cell leading edge. Promotes filipodia formation. Plays a regulatory role in autophagic activity. In complex with PHAF1, associates with the preautophagosomal structure during both non-selective and selective autophagy. Probably binds phosphatidylinositol 3-phosphate (PtdIns3P) which would mediate the recruitment preautophagosomal structures. This is BCAS3 microtubule associated cell migration factor from Mus musculus (Mouse).